The primary structure comprises 250 residues: Small ribosomal subunit protein uS3 (250 aa).

The KH type-2 domain maps to 39–111 (IRTLIKNHYP…KIQINIFEVK (73 aa)).

It belongs to the universal ribosomal protein uS3 family. As to quaternary structure, part of the 30S ribosomal subunit. Forms a tight complex with proteins S10 and S14.

In terms of biological role, binds the lower part of the 30S subunit head. Binds mRNA in the 70S ribosome, positioning it for translation. The sequence is that of Small ribosomal subunit protein uS3 from Elm witches'-broom phytoplasma.